The sequence spans 234 residues: 1-(5-phosphoribosyl)-5-[(5-phosphoribosylamino)methylideneamino] imidazole-4-carboxamide isomerase (234 aa).

Asp9 serves as the catalytic Proton acceptor. The active-site Proton donor is the Asp131.

Belongs to the HisA/HisF family.

The protein resides in the cytoplasm. The enzyme catalyses 1-(5-phospho-beta-D-ribosyl)-5-[(5-phospho-beta-D-ribosylamino)methylideneamino]imidazole-4-carboxamide = 5-[(5-phospho-1-deoxy-D-ribulos-1-ylimino)methylamino]-1-(5-phospho-beta-D-ribosyl)imidazole-4-carboxamide. Its pathway is amino-acid biosynthesis; L-histidine biosynthesis; L-histidine from 5-phospho-alpha-D-ribose 1-diphosphate: step 4/9. This is 1-(5-phosphoribosyl)-5-[(5-phosphoribosylamino)methylideneamino] imidazole-4-carboxamide isomerase from Staphylococcus carnosus (strain TM300).